The chain runs to 236 residues: Leucyl/phenylalanyl-tRNA--protein transferase (236 aa).

It belongs to the L/F-transferase family.

The protein localises to the cytoplasm. The enzyme catalyses N-terminal L-lysyl-[protein] + L-leucyl-tRNA(Leu) = N-terminal L-leucyl-L-lysyl-[protein] + tRNA(Leu) + H(+). The catalysed reaction is N-terminal L-arginyl-[protein] + L-leucyl-tRNA(Leu) = N-terminal L-leucyl-L-arginyl-[protein] + tRNA(Leu) + H(+). It carries out the reaction L-phenylalanyl-tRNA(Phe) + an N-terminal L-alpha-aminoacyl-[protein] = an N-terminal L-phenylalanyl-L-alpha-aminoacyl-[protein] + tRNA(Phe). Its function is as follows. Functions in the N-end rule pathway of protein degradation where it conjugates Leu, Phe and, less efficiently, Met from aminoacyl-tRNAs to the N-termini of proteins containing an N-terminal arginine or lysine. In Shewanella sp. (strain MR-7), this protein is Leucyl/phenylalanyl-tRNA--protein transferase.